A 387-amino-acid polypeptide reads, in one-letter code: Migration and invasion-inhibitory protein (387 aa).

The segment covering 50–59 has biased composition (polar residues); sequence NLEMPLSQET. 2 disordered regions span residues 50–80 and 133–172; these read NLEMPLSQETSSASSVAPSSQDKRHMLDPLD and VSLGGPKGLGPDKTQVPRSILSRLSKPSKPRVTSQESAVP. Low complexity predominate over residues 60–69; it reads SSASSVAPSS. Basic and acidic residues predominate over residues 70–80; it reads QDKRHMLDPLD. At serine 307 the chain carries Phosphoserine.

Interacts with IGFBP2.

Its function is as follows. Inhibits glioma cells invasion and down-regulates adhesion- and motility-associated genes such as NFKB2 and ICAM1. Exhibits opposing effects to IGFBP2 on cell invasion. The polypeptide is Migration and invasion-inhibitory protein (Miip) (Mus musculus (Mouse)).